A 229-amino-acid polypeptide reads, in one-letter code: Cytidylate kinase (229 aa).

Residue 12-20 (GPSGAGKGT) coordinates ATP.

It belongs to the cytidylate kinase family. Type 1 subfamily.

The protein localises to the cytoplasm. It catalyses the reaction CMP + ATP = CDP + ADP. It carries out the reaction dCMP + ATP = dCDP + ADP. The protein is Cytidylate kinase of Serratia proteamaculans (strain 568).